The sequence spans 220 residues: PKHD-type hydroxylase PCC7424_1929 (220 aa).

Residues 77-173 (KIHSLLFSRY…RLVAVGWVQS (97 aa)) form the Fe2OG dioxygenase domain. His-95, Asp-97, and His-154 together coordinate Fe cation. Residue Arg-164 coordinates 2-oxoglutarate.

Requires Fe(2+) as cofactor. The cofactor is L-ascorbate.

This Gloeothece citriformis (strain PCC 7424) (Cyanothece sp. (strain PCC 7424)) protein is PKHD-type hydroxylase PCC7424_1929.